We begin with the raw amino-acid sequence, 434 residues long: Nicotinate phosphoribosyltransferase (434 aa).

Histidine 242 carries the post-translational modification Phosphohistidine; by autocatalysis.

Belongs to the NAPRTase family. Post-translationally, transiently phosphorylated on a His residue during the reaction cycle. Phosphorylation strongly increases the affinity for substrates and increases the rate of nicotinate D-ribonucleotide production. Dephosphorylation regenerates the low-affinity form of the enzyme, leading to product release.

It catalyses the reaction nicotinate + 5-phospho-alpha-D-ribose 1-diphosphate + ATP + H2O = nicotinate beta-D-ribonucleotide + ADP + phosphate + diphosphate. It participates in cofactor biosynthesis; NAD(+) biosynthesis; nicotinate D-ribonucleotide from nicotinate: step 1/1. Catalyzes the synthesis of beta-nicotinate D-ribonucleotide from nicotinate and 5-phospho-D-ribose 1-phosphate at the expense of ATP. In Sinorhizobium medicae (strain WSM419) (Ensifer medicae), this protein is Nicotinate phosphoribosyltransferase.